Here is a 343-residue protein sequence, read N- to C-terminus: Protein RecA (343 aa).

66-73 (GPESSGKT) contacts ATP. Residues 319–343 (IERQIREKHLPKRSAKADEAESAEA) form a disordered region.

It belongs to the RecA family.

It is found in the cytoplasm. Functionally, can catalyze the hydrolysis of ATP in the presence of single-stranded DNA, the ATP-dependent uptake of single-stranded DNA by duplex DNA, and the ATP-dependent hybridization of homologous single-stranded DNAs. It interacts with LexA causing its activation and leading to its autocatalytic cleavage. The sequence is that of Protein RecA from Thioalkalivibrio sulfidiphilus (strain HL-EbGR7).